A 208-amino-acid chain; its full sequence is Holliday junction branch migration complex subunit RuvA (208 aa).

A domain I region spans residues 1 to 64; that stretch reads MIGKLKGIVD…EDMIRLYGFR (64 aa). Residues 65 to 143 form a domain II region; sequence SDAEREWFRL…AFAPVDPALV (79 aa). Residues 144–152 form a flexible linker region; it reads ALTGAVEDR. Residues 153-208 form a domain III region; the sequence is TAPQPVADAISALVNLGYPQVQASAAIAAALKGLGDGAETVEAKTLIRLGLRELAR.

The protein belongs to the RuvA family. Homotetramer. Forms an RuvA(8)-RuvB(12)-Holliday junction (HJ) complex. HJ DNA is sandwiched between 2 RuvA tetramers; dsDNA enters through RuvA and exits via RuvB. An RuvB hexamer assembles on each DNA strand where it exits the tetramer. Each RuvB hexamer is contacted by two RuvA subunits (via domain III) on 2 adjacent RuvB subunits; this complex drives branch migration. In the full resolvosome a probable DNA-RuvA(4)-RuvB(12)-RuvC(2) complex forms which resolves the HJ.

It is found in the cytoplasm. Its function is as follows. The RuvA-RuvB-RuvC complex processes Holliday junction (HJ) DNA during genetic recombination and DNA repair, while the RuvA-RuvB complex plays an important role in the rescue of blocked DNA replication forks via replication fork reversal (RFR). RuvA specifically binds to HJ cruciform DNA, conferring on it an open structure. The RuvB hexamer acts as an ATP-dependent pump, pulling dsDNA into and through the RuvAB complex. HJ branch migration allows RuvC to scan DNA until it finds its consensus sequence, where it cleaves and resolves the cruciform DNA. In Methylorubrum populi (strain ATCC BAA-705 / NCIMB 13946 / BJ001) (Methylobacterium populi), this protein is Holliday junction branch migration complex subunit RuvA.